A 366-amino-acid polypeptide reads, in one-letter code: UPF0324 membrane protein RSc1111 (366 aa).

The next 8 membrane-spanning stretches (helical) occupy residues 21-43 (LAGA…TAWA), 103-125 (LGAS…GAWV), 137-159 (AVLV…APAV), 169-191 (AIAS…YALA), 198-220 (VAPA…VIAA), 240-262 (VLAL…LVLE), 283-305 (WFAA…ATWH), and 343-365 (AGVL…RWLA).

The protein belongs to the UPF0324 family.

The protein localises to the cell membrane. The protein is UPF0324 membrane protein RSc1111 of Ralstonia nicotianae (strain ATCC BAA-1114 / GMI1000) (Ralstonia solanacearum).